The primary structure comprises 71 residues: DNA-directed RNA polymerase subunit epsilon (71 aa).

It belongs to the RNA polymerase subunit epsilon family. In terms of assembly, RNAP is composed of a core of 2 alpha, a beta and a beta' subunit. The core is associated with a delta subunit, and at least one of epsilon or omega. When a sigma factor is associated with the core the holoenzyme is formed, which can initiate transcription.

It catalyses the reaction RNA(n) + a ribonucleoside 5'-triphosphate = RNA(n+1) + diphosphate. A non-essential component of RNA polymerase (RNAP). This chain is DNA-directed RNA polymerase subunit epsilon, found in Geobacillus thermodenitrificans (strain NG80-2).